The primary structure comprises 154 residues: Ribonuclease P protein subunit p21 (154 aa).

At Ala2 the chain carries N-acetylalanine. 4 residues coordinate Zn(2+): Cys62, Cys65, Cys92, and Cys95. The interval 112–154 (DRPEAQLGNQADSKPLQPLPNTAHSISDHLPEEKMQIQGSSDQ) is disordered. A compositionally biased stretch (basic and acidic residues) spans 137-146 (ISDHLPEEKM).

The protein belongs to the eukaryotic/archaeal RNase P protein component 4 family. In terms of assembly, RNase P consists of a catalytic RNA moiety and about 10 protein subunits; POP1, POP4, POP5, POP7, RPP14, RPP21, RPP25, RPP30, RPP38 and RPP40. Within the RNase P complex, POP1, POP7 and RPP25 form the 'finger' subcomplex, POP5, RPP14, RPP40 and homodimeric RPP30 form the 'palm' subcomplex, and RPP21, POP4 and RPP38 form the 'wrist' subcomplex. All subunits of the RNase P complex interact with the catalytic RNA.

The protein resides in the nucleus. It is found in the nucleolus. In terms of biological role, component of ribonuclease P, a ribonucleoprotein complex that generates mature tRNA molecules by cleaving their 5'-ends. This is Ribonuclease P protein subunit p21 (RPP21) from Macaca mulatta (Rhesus macaque).